Consider the following 360-residue polypeptide: 3-isopropylmalate dehydrogenase (360 aa).

Residue 76–89 (GPKWDKIERDIRPE) participates in NAD(+) binding. Substrate is bound by residues R96, R106, R134, and D224. Mg(2+) is bound by residues D224, D248, and D252. 282 to 294 (GSAPDIAGLGIAN) contacts NAD(+).

Belongs to the isocitrate and isopropylmalate dehydrogenases family. LeuB type 1 subfamily. Homodimer. It depends on Mg(2+) as a cofactor. Mn(2+) is required as a cofactor.

It is found in the cytoplasm. The enzyme catalyses (2R,3S)-3-isopropylmalate + NAD(+) = 4-methyl-2-oxopentanoate + CO2 + NADH. It participates in amino-acid biosynthesis; L-leucine biosynthesis; L-leucine from 3-methyl-2-oxobutanoate: step 3/4. Catalyzes the oxidation of 3-carboxy-2-hydroxy-4-methylpentanoate (3-isopropylmalate) to 3-carboxy-4-methyl-2-oxopentanoate. The product decarboxylates to 4-methyl-2 oxopentanoate. The protein is 3-isopropylmalate dehydrogenase of Pseudomonas putida (strain ATCC 47054 / DSM 6125 / CFBP 8728 / NCIMB 11950 / KT2440).